The sequence spans 76 residues: Exodeoxyribonuclease 7 small subunit (76 aa).

Belongs to the XseB family. In terms of assembly, heterooligomer composed of large and small subunits.

The protein resides in the cytoplasm. It carries out the reaction Exonucleolytic cleavage in either 5'- to 3'- or 3'- to 5'-direction to yield nucleoside 5'-phosphates.. Functionally, bidirectionally degrades single-stranded DNA into large acid-insoluble oligonucleotides, which are then degraded further into small acid-soluble oligonucleotides. The polypeptide is Exodeoxyribonuclease 7 small subunit (Gluconacetobacter diazotrophicus (strain ATCC 49037 / DSM 5601 / CCUG 37298 / CIP 103539 / LMG 7603 / PAl5)).